Consider the following 343-residue polypeptide: N-malonyltransferase FDB2 (343 aa).

C107 functions as the Acyl-thioester intermediate in the catalytic mechanism. The active-site Proton acceptor is H155. Residue D170 is part of the active site.

The protein belongs to the arylamine N-acetyltransferase family.

It participates in xenobiotic degradation. N-malonyltransferase; part of the Fusarium detoxification of benzoxazolinone cluster involved in the degradation of benzoxazolinones produced by the host plant. Maize, wheat, and rye produce the 2 benzoxazinone phytoanticipins 2,4-dihy-droxy-7-methoxy-1,4-benzoxazin-3-one (DIMBOA) and 2,4-dihydroxy-1,4-benzoxazin-3-one (DIBOA) that, due to their inherent instability once released, spontaneously degrade to the more stable corresponding benzoxazolinones, 6-methoxy-2-benzoxazolinone (MBOA) and 2-benzoxazolinone (BOA), respectively. The first step in the detoxification of benzoxazolinones involves the hydrolysis of the cyclic ester bond of benzoxazolinones by the gamma-lactamase FDB1 to aminophenols. FDB1 is able to convert BOA into 2-aminophenol (2-AP), as well as MBOA into 5-methoxy-2-aminophenol (2-AMP). The N-malonyltransferase FDB2 then metabolizes aminophenols via N-malonylation to non-toxic malonamic acids. FDB2 converts 2-AP into N-(2-hydroxyphenyl) malonamic acid (HPMA) and 2-AMP into N-(2-hydroxy-4-methoxyphenyl) malonamic acid (HMPMA). The cluster also contains 2 transcription factors (FDB3 and FPSE_08121), an aldo-keto reductase (FPSE_08125) that possibly associates with a ketone component of BOA and MBOA degradation, an esterase (FPSE_08126), an acyl-CoA transferase (FPSE_08120), a solute carrier protein (FPSE_08119) and a transmembrane transporter (FPSE_08127) proposed to shuttle metabolites of benzoxazolinone degradation. In Fusarium pseudograminearum (strain CS3096) (Wheat and barley crown-rot fungus), this protein is N-malonyltransferase FDB2.